A 342-amino-acid polypeptide reads, in one-letter code: Dual-specificity RNA methyltransferase RlmN (342 aa).

E92 (proton acceptor) is an active-site residue. A Radical SAM core domain is found at 98–329 (DLPRSTLCVS…THVRRSRGGE (232 aa)). The cysteines at positions 105 and 334 are disulfide-linked. [4Fe-4S] cluster-binding residues include C112, C116, and C119. S-adenosyl-L-methionine-binding positions include 161-162 (GE), S193, 215-217 (SLH), and N291. The S-methylcysteine intermediate role is filled by C334.

The protein belongs to the radical SAM superfamily. RlmN family. Requires [4Fe-4S] cluster as cofactor.

The protein resides in the cytoplasm. It carries out the reaction adenosine(2503) in 23S rRNA + 2 reduced [2Fe-2S]-[ferredoxin] + 2 S-adenosyl-L-methionine = 2-methyladenosine(2503) in 23S rRNA + 5'-deoxyadenosine + L-methionine + 2 oxidized [2Fe-2S]-[ferredoxin] + S-adenosyl-L-homocysteine. The enzyme catalyses adenosine(37) in tRNA + 2 reduced [2Fe-2S]-[ferredoxin] + 2 S-adenosyl-L-methionine = 2-methyladenosine(37) in tRNA + 5'-deoxyadenosine + L-methionine + 2 oxidized [2Fe-2S]-[ferredoxin] + S-adenosyl-L-homocysteine. Functionally, specifically methylates position 2 of adenine 2503 in 23S rRNA and position 2 of adenine 37 in tRNAs. m2A2503 modification seems to play a crucial role in the proofreading step occurring at the peptidyl transferase center and thus would serve to optimize ribosomal fidelity. This Syntrophobacter fumaroxidans (strain DSM 10017 / MPOB) protein is Dual-specificity RNA methyltransferase RlmN.